Reading from the N-terminus, the 428-residue chain is L-rhamnose isomerase (428 aa).

Mn(2+) contacts are provided by histidine 260, aspartate 292, and aspartate 294.

It belongs to the rhamnose isomerase family. The cofactor is Mn(2+).

The protein resides in the cytoplasm. The enzyme catalyses L-rhamnopyranose = L-rhamnulose. It participates in carbohydrate degradation; L-rhamnose degradation; glycerone phosphate from L-rhamnose: step 1/3. In terms of biological role, catalyzes the interconversion of L-rhamnose and L-rhamnulose. This chain is L-rhamnose isomerase, found in Enterococcus faecalis (strain ATCC 700802 / V583).